The chain runs to 403 residues: Aurora kinase A (403 aa).

The tract at residues 1-125 (MDRSKENCIS…SKQKNEESKK (125 aa)) is disordered. Composition is skewed to polar residues over residues 27 to 83 (VTQQ…QATS) and 91 to 101 (PLNNTQKSKQP). Phosphoserine is present on residues Ser41 and Ser51. Basic and acidic residues predominate over residues 114–125 (LASKQKNEESKK). The region spanning 133 to 383 (FEIGRPLGKG…LREVLEHPWI (251 aa)) is the Protein kinase domain. ATP-binding positions include Lys143, Lys162, and 211 to 213 (EYA). Asp256 acts as the Proton acceptor in catalysis. Lys258 is covalently cross-linked (Glycyl lysine isopeptide (Lys-Gly) (interchain with G-Cter in SUMO2)). Residues 260–261 (EN) and Asp274 contribute to the ATP site. Positions 280–293 (HAPSSRRTTLCGTL) are activation segment. Phosphothreonine is present on residues Thr287 and Thr288. A Phosphoserine; by PKA and PAK modification is found at Ser342.

The protein belongs to the protein kinase superfamily. Ser/Thr protein kinase family. Aurora subfamily. Part of a complex composed of NEDD9, AURKA and CTTN; within the complex NEDD9 acts as a scaffold protein and is required for complex formation. Identified in a complex with AUNIP and NIN. Interacts with FBXL7. Interacts with CPEB1, JTB, TACC1, TPX2, PPP2CA, as well as with the protein phosphatase type 1 (PP1) isoforms PPP1CA, PPP1CB and PPP1CC. Also interacts with its substrates ARHGEF2, BORA, KIF2A, PARD3, and p53/TP53. Interaction with BORA promotes phosphorylation of PLK1. Interacts with CIMAP3. Interacts with GADD45A, competing with its oligomerization. Interacts (via C-terminus) with AUNIP (via C-terminus). Interacts with FRY; this interaction facilitates AURKA-mediated PLK1 phosphorylation. Interacts with SIRT2. Interacts with MYCN; interaction is phospho-independent and triggers AURKA activation; AURKA competes with FBXW7 for binding to unphosphorylated MYCN but not for binding to phosphorylated MYCN. Interacts with HNRNPU. Interacts with AAAS. Interacts with KLHL18 and CUL3. Interacts with FOXP1. Interacts with HDAC6; AURKA-mediated phosphorylation of HDAC6 promotes deacetylation of alpha-tubulin. Activated by phosphorylation at Thr-288; this brings about a change in the conformation of the activation segment. Phosphorylation at Thr-288 varies during the cell cycle and is highest during M phase. Autophosphorylated at Thr-288 upon TPX2 binding. Thr-288 can be phosphorylated by several kinases, including PAK and PKA. Protein phosphatase type 1 (PP1) binds AURKA and inhibits its activity by dephosphorylating Thr-288 during mitosis. Phosphorylation at Ser-342 decreases the kinase activity. PPP2CA controls degradation by dephosphorylating Ser-51 at the end of mitosis. In terms of processing, ubiquitinated by the E3 ubiquitin-protein ligase complex SCF(FBXL7) during mitosis, leading to its degradation by the proteasome. Ubiquitinated by CHFR, leading to its degradation by the proteasome. Ubiquitinated by the anaphase-promoting complex (APC), leading to its degradation by the proteasome. Ubiquitinated by the CUL3-KLHL18 ligase leading to its activation at the centrosome which is required for initiating mitotic entry. Ubiquitination mediated by CUL3-KLHL18 ligase does not lead to its degradation by the proteasome. In terms of tissue distribution, highly expressed in testis and weakly in skeletal muscle, thymus and spleen. Also highly expressed in colon, ovarian, prostate, neuroblastoma, breast and cervical cancer cell lines.

The protein localises to the cytoplasm. The protein resides in the cytoskeleton. Its subcellular location is the microtubule organizing center. It is found in the centrosome. It localises to the spindle pole. The protein localises to the centriole. The protein resides in the cell projection. Its subcellular location is the neuron projection. It is found in the cilium. It localises to the cilium basal body. The protein localises to the basolateral cell membrane. The catalysed reaction is L-seryl-[protein] + ATP = O-phospho-L-seryl-[protein] + ADP + H(+). It carries out the reaction L-threonyl-[protein] + ATP = O-phospho-L-threonyl-[protein] + ADP + H(+). Its activity is regulated as follows. Activation of CDK1, appears to be an upstream event of AURKA activation. Phosphatase inhibitor-2 (PPP1R2) and TPX2 act also as activators. Inactivated by the G2 checkpoint. Inhibited by GADD45A and p53/TP53, and through dephosphorylation by protein phosphatase type 1 (PP1). MLN8054 is also a potent and selective inhibitor. Activated during the early phase of cilia disassembly in the presence of CIMAP3. Inhibited by the small molecule inhibitor VX-680. In terms of biological role, mitotic serine/threonine kinase that contributes to the regulation of cell cycle progression. Associates with the centrosome and the spindle microtubules during mitosis and plays a critical role in various mitotic events including the establishment of mitotic spindle, centrosome duplication, centrosome separation as well as maturation, chromosomal alignment, spindle assembly checkpoint, and cytokinesis. Required for normal spindle positioning during mitosis and for the localization of NUMA1 and DCTN1 to the cell cortex during metaphase. Required for initial activation of CDK1 at centrosomes. Phosphorylates numerous target proteins, including ARHGEF2, BORA, BRCA1, CDC25B, DLGP5, HDAC6, KIF2A, LATS2, NDEL1, PARD3, PPP1R2, PLK1, RASSF1, TACC3, p53/TP53 and TPX2. Phosphorylates MCRS1 which is required for MCRS1-mediated kinetochore fiber assembly and mitotic progression. Regulates KIF2A tubulin depolymerase activity. Important for microtubule formation and/or stabilization. Required for normal axon formation. Plays a role in microtubule remodeling during neurite extension. Also acts as a key regulatory component of the p53/TP53 pathway, and particularly the checkpoint-response pathways critical for oncogenic transformation of cells, by phosphorylating and destabilizing p53/TP53. Phosphorylates its own inhibitors, the protein phosphatase type 1 (PP1) isoforms, to inhibit their activity. Inhibits cilia outgrowth. Required for cilia disassembly via phosphorylation of HDAC6 and subsequent deacetylation of alpha-tubulin. Regulates protein levels of the anti-apoptosis protein BIRC5 by suppressing the expression of the SCF(FBXL7) E3 ubiquitin-protein ligase substrate adapter FBXL7 through the phosphorylation of the transcription factor FOXP1. This chain is Aurora kinase A, found in Homo sapiens (Human).